Here is a 217-residue protein sequence, read N- to C-terminus: Holliday junction branch migration complex subunit RuvA (217 aa).

The interval 1-64 (MIGKLTGILD…EDAIRLFGFE (64 aa)) is domain I. The segment at 65-145 (TKVEQDWFCL…NAPHQSMPHF (81 aa)) is domain II. Residues 146 to 160 (VSYSSETSSQAGTQH) form a flexible linker region. Residues 161 to 217 (TGHQHSMDALAALTKLGFERDQATHALQEAIKAFEGETPSSALLIRHSLKLLSSHLK) are domain III.

Belongs to the RuvA family. Homotetramer. Forms an RuvA(8)-RuvB(12)-Holliday junction (HJ) complex. HJ DNA is sandwiched between 2 RuvA tetramers; dsDNA enters through RuvA and exits via RuvB. An RuvB hexamer assembles on each DNA strand where it exits the tetramer. Each RuvB hexamer is contacted by two RuvA subunits (via domain III) on 2 adjacent RuvB subunits; this complex drives branch migration. In the full resolvosome a probable DNA-RuvA(4)-RuvB(12)-RuvC(2) complex forms which resolves the HJ.

The protein resides in the cytoplasm. In terms of biological role, the RuvA-RuvB-RuvC complex processes Holliday junction (HJ) DNA during genetic recombination and DNA repair, while the RuvA-RuvB complex plays an important role in the rescue of blocked DNA replication forks via replication fork reversal (RFR). RuvA specifically binds to HJ cruciform DNA, conferring on it an open structure. The RuvB hexamer acts as an ATP-dependent pump, pulling dsDNA into and through the RuvAB complex. HJ branch migration allows RuvC to scan DNA until it finds its consensus sequence, where it cleaves and resolves the cruciform DNA. This Bartonella bacilliformis (strain ATCC 35685 / KC583 / Herrer 020/F12,63) protein is Holliday junction branch migration complex subunit RuvA.